The chain runs to 305 residues: Ferrochelatase (305 aa).

Positions 182 and 262 each coordinate Fe cation.

This sequence belongs to the ferrochelatase family.

Its subcellular location is the cytoplasm. It carries out the reaction heme b + 2 H(+) = protoporphyrin IX + Fe(2+). It functions in the pathway porphyrin-containing compound metabolism; protoheme biosynthesis; protoheme from protoporphyrin-IX: step 1/1. Functionally, catalyzes the ferrous insertion into protoporphyrin IX. This is Ferrochelatase from Herpetosiphon aurantiacus (strain ATCC 23779 / DSM 785 / 114-95).